Consider the following 383-residue polypeptide: Succinyl-diaminopimelate desuccinylase (383 aa).

Histidine 73 is a Zn(2+) binding site. The active site involves aspartate 75. Residue aspartate 107 coordinates Zn(2+). The active-site Proton acceptor is the glutamate 141. Positions 142, 170, and 356 each coordinate Zn(2+).

Belongs to the peptidase M20A family. DapE subfamily. In terms of assembly, homodimer. It depends on Zn(2+) as a cofactor. The cofactor is Co(2+).

It catalyses the reaction N-succinyl-(2S,6S)-2,6-diaminopimelate + H2O = (2S,6S)-2,6-diaminopimelate + succinate. Its pathway is amino-acid biosynthesis; L-lysine biosynthesis via DAP pathway; LL-2,6-diaminopimelate from (S)-tetrahydrodipicolinate (succinylase route): step 3/3. In terms of biological role, catalyzes the hydrolysis of N-succinyl-L,L-diaminopimelic acid (SDAP), forming succinate and LL-2,6-diaminopimelate (DAP), an intermediate involved in the bacterial biosynthesis of lysine and meso-diaminopimelic acid, an essential component of bacterial cell walls. This is Succinyl-diaminopimelate desuccinylase from Pseudomonas putida (strain ATCC 700007 / DSM 6899 / JCM 31910 / BCRC 17059 / LMG 24140 / F1).